Here is a 381-residue protein sequence, read N- to C-terminus: Cytochrome b (381 aa).

The next 4 helical transmembrane spans lie at phenylalanine 34–methionine 54, tryptophan 78–isoleucine 99, tryptophan 114–leucine 134, and phenylalanine 179–leucine 199. 2 residues coordinate heme b: histidine 84 and histidine 98. Heme b-binding residues include histidine 183 and histidine 197. Histidine 202 is a binding site for a ubiquinone. 4 helical membrane passes run tyrosine 227–methionine 247, leucine 289–histidine 309, leucine 321–glycine 341, and phenylalanine 348–proline 368.

It belongs to the cytochrome b family. In terms of assembly, the cytochrome bc1 complex contains 3 respiratory subunits (MT-CYB, CYC1 and UQCRFS1), 2 core proteins (UQCRC1 and UQCRC2) and probably 6 low-molecular weight proteins. Heme b serves as cofactor.

It localises to the mitochondrion inner membrane. Its function is as follows. Component of the ubiquinol-cytochrome c reductase complex (complex III or cytochrome b-c1 complex) that is part of the mitochondrial respiratory chain. The b-c1 complex mediates electron transfer from ubiquinol to cytochrome c. Contributes to the generation of a proton gradient across the mitochondrial membrane that is then used for ATP synthesis. This Sphyrna tiburo vespertina (Pacific bonnethead shark) protein is Cytochrome b (mt-cyb).